Here is a 341-residue protein sequence, read N- to C-terminus: NADH-quinone oxidoreductase subunit H 1 (341 aa).

The next 9 membrane-spanning stretches (helical) occupy residues 7–27, 46–66, 80–100, 111–131, 157–177, 183–203, 244–264, 273–293, and 305–325; these read IILT…ISLL, PNVV…KYIF, FFLA…VIPF, VAIL…IMGG, LGLI…SHIV, AFGL…LFFI, YIAI…GWLS, VFWM…VKAI, and IGWK…AFLA.

This sequence belongs to the complex I subunit 1 family. As to quaternary structure, NDH-1 is composed of 14 different subunits. Subunits NuoA, H, J, K, L, M, N constitute the membrane sector of the complex.

The protein localises to the cell inner membrane. It carries out the reaction a quinone + NADH + 5 H(+)(in) = a quinol + NAD(+) + 4 H(+)(out). NDH-1 shuttles electrons from NADH, via FMN and iron-sulfur (Fe-S) centers, to quinones in the respiratory chain. The immediate electron acceptor for the enzyme in this species is believed to be ubiquinone. Couples the redox reaction to proton translocation (for every two electrons transferred, four hydrogen ions are translocated across the cytoplasmic membrane), and thus conserves the redox energy in a proton gradient. This subunit may bind ubiquinone. In Cereibacter sphaeroides (strain ATCC 17029 / ATH 2.4.9) (Rhodobacter sphaeroides), this protein is NADH-quinone oxidoreductase subunit H 1.